The sequence spans 52 residues: UPF0181 protein HD_1137 (52 aa).

It belongs to the UPF0181 family.

This chain is UPF0181 protein HD_1137, found in Haemophilus ducreyi (strain 35000HP / ATCC 700724).